A 408-amino-acid polypeptide reads, in one-letter code: Broad specificity amino-acid racemase (408 aa).

An N-terminal signal peptide occupies residues 1-21; the sequence is MHKKTLLATLILGLLAGQAVA. The cysteines at positions 70 and 96 are disulfide-linked. Residue Lys-74 is the Proton acceptor of the active site. Position 74 is an N6-(pyridoxal phosphate)lysine (Lys-74). Arg-173 serves as a coordination point for substrate. Tyr-300 (proton acceptor) is an active-site residue. Met-348 contacts substrate.

This sequence belongs to the alanine racemase family. Bsr subfamily. Homodimer. Requires pyridoxal 5'-phosphate as cofactor.

Its subcellular location is the periplasm. The enzyme catalyses an L-alpha-amino acid = a D-alpha-amino acid. It catalyses the reaction L-lysine = D-lysine. The catalysed reaction is L-arginine = D-arginine. It carries out the reaction L-alanine = D-alanine. The enzyme catalyses L-serine = D-serine. It catalyses the reaction L-methionine = D-methionine. The catalysed reaction is L-leucine = D-leucine. It carries out the reaction L-cysteine = D-cysteine. The enzyme catalyses L-glutamine = D-glutamine. It catalyses the reaction L-asparagine = D-asparagine. The catalysed reaction is L-histidine = D-histidine. Amino-acid racemase able to utilize a broad range of substrates. Reversibly racemizes ten of the 19 natural chiral amino acids known, including both non-beta-branched aliphatic amino acids (Ala, Leu, Met, Ser, Cys, Gln and Asn) and positively charged amino acids (His, Lys and Arg). Is not active on negatively charged (Glu and Asp) or aromatic (Tyr, Trp and Phe) amino acids and displays minimal activity towards beta-branched aliphatic (Ile, Val and Thr) substrates. Enables bacteria to produce and release extracellular non-canonical D-amino acids (NCDAAs) that regulate diverse cellular processes. This Aeromonas hydrophila subsp. hydrophila (strain ATCC 7966 / DSM 30187 / BCRC 13018 / CCUG 14551 / JCM 1027 / KCTC 2358 / NCIMB 9240 / NCTC 8049) protein is Broad specificity amino-acid racemase.